A 349-amino-acid polypeptide reads, in one-letter code: MGQEEELLRIAKKLEKMVARKKTEGALDLLKKLGSWQMSIQLLQTTRIGVAVNGVRKHCSNKEVVALAKVLIRNWKQLLDSPATPKGEKGEERVKAKKKEKGLDCSDWKPETSLSPPRKKRVEEPKDRRDSVDSKSSATSSPKRPSMERSNSSKSKAETPRTPSSPSSPTFAPSVCLLAPCYLTGDSVRDKCVEMLSAALKADDDYKDYGVNCDKMASEIEDHIYQELKSTDMKYRNRVRSRISNLKDPRNPGLRRNVLSGAISAGLIAKMTAEEMASDELRELRNAMTQEAIREHQMAKTGGTTTDLFQCSKCKKKNCTYNQVQTRSADEPMTTFVLCNECGNRWKFC.

The TFIIS N-terminal domain maps to 5 to 82 (EELLRIAKKL…RNWKQLLDSP (78 aa)). The segment at 80-170 (DSPATPKGEK…RTPSSPSSPT (91 aa)) is disordered. Over residues 101 to 110 (KGLDCSDWKP) the composition is skewed to basic and acidic residues. At Ser-115 the chain carries Phosphoserine. Basic and acidic residues predominate over residues 121-133 (RVEEPKDRRDSVD). Low complexity-rich tracts occupy residues 134–144 (SKSSATSSPKR) and 160–170 (PRTPSSPSSPT). Position 141 is a phosphoserine (Ser-141). Residues 188–304 (VRDKCVEMLS…EHQMAKTGGT (117 aa)) form the TFIIS central domain. The TFIIS-type zinc-finger motif lies at 307–347 (DLFQCSKCKKKNCTYNQVQTRSADEPMTTFVLCNECGNRWK). The Zn(2+) site is built by Cys-311, Cys-314, Cys-339, and Cys-342.

Belongs to the TFS-II family.

The protein resides in the nucleus. In terms of biological role, necessary for efficient RNA polymerase II transcription elongation past template-encoded arresting sites. The arresting sites in DNA have the property of trapping a certain fraction of elongating RNA polymerases that pass through, resulting in locked ternary complexes. Cleavage of the nascent transcript by S-II allows the resumption of elongation from the new 3'-terminus. The polypeptide is Transcription elongation factor A protein 3 (TCEA3) (Bos taurus (Bovine)).